Consider the following 562-residue polypeptide: Endochitinase (562 aa).

A signal peptide spans 1-20 (MSLLYIILLFTQFLLLPTDA). In terms of domain architecture, GH18 spans 27-311 (TNIAVYWGQN…EILKNLLTSA (285 aa)). Catalysis depends on E157, which acts as the Proton donor. Disordered stretches follow at residues 329–358 (TSSASTSSASTSQKKTTQSTTSTQSKSKVT) and 461–484 (TLSPTTTSTSSGSTSSGSTSSDST). The segment at 481–562 (SDSTARTLAK…NFSYLESNYF (82 aa)) is chitin-binding, high affinity. An N-linked (GlcNAc...) asparagine glycan is attached at N553.

Belongs to the glycosyl hydrolase 18 family. Chitinase class V subfamily. Extensively glycosylated with a series of short O-linked mannose oligosaccharides ranging in size from Man(2) to Man(5).

It localises to the secreted. Its subcellular location is the cell wall. It catalyses the reaction Random endo-hydrolysis of N-acetyl-beta-D-glucosaminide (1-&gt;4)-beta-linkages in chitin and chitodextrins.. Chitinase is required for cell separation during growth of S.cerevisiae. This is Endochitinase (CTS1) from Saccharomyces cerevisiae (strain ATCC 204508 / S288c) (Baker's yeast).